We begin with the raw amino-acid sequence, 178 residues long: MTTGLPSQTQVIELLGGEFARAGYEIEDVVIDAHARPPRITVIADGDDGLDLDAAATLSRSASALLDKLDTIEDHYVLEVSSPGVDRPLRTPKHFRRARGRKVDVVLSDNSTVTGRVGETGDDTVALVVRAGRDWAIREIPLGDVVKAVVQVEFSPPAQAELELAGVGGTDKTEERRK.

Belongs to the RimP family.

It localises to the cytoplasm. Required for maturation of 30S ribosomal subunits. In Mycobacterium avium (strain 104), this protein is Ribosome maturation factor RimP.